Consider the following 302-residue polypeptide: AT-hook motif nuclear-localized protein 29 (302 aa).

The disordered stretch occupies residues 1–95 (MDGGYDQSGG…KPPVIVTRDS (95 aa)). The segment covering 32-44 (QLHPLPQPQPQPQ) has biased composition (pro residues). Positions 72–84 (KRPRGRPPGSKNK) form a DNA-binding region, a.T hook. One can recognise a PPC domain in the interval 96–241 (PNVLRSHVLE…DEGGEGGEGG (146 aa)). The required for the binding to non-AHL interactors stretch occupies residues 164–169 (GRFEIL). The segment at 229–279 (PLEDEGGEGGEGGEVGEGGGGEGGPPPATSSSPPSGAGQGQLRGNMSGYDQ) is disordered. Residues 237-251 (GGEGGEVGEGGGGEG) are compositionally biased toward gly residues.

As to quaternary structure, homodimer. Interacts with AHL5, AHL12, AHL25, AHL27, TCP4, TCP13 and EF114. Expressed in the hypocotyl and the vascular tissue of seedling.

It localises to the nucleus. In terms of biological role, transcription factor that specifically binds AT-rich DNA sequences related to the nuclear matrix attachment regions (MARs). Acts redundantly with AHL18, AHL22 and AHL27 in the regulation of flowering and regulation of the hypocotyl elongation. Acts redundantly with AHL27/ESC to modulate hypocotyl growth inhibition in response to light. The sequence is that of AT-hook motif nuclear-localized protein 29 from Arabidopsis thaliana (Mouse-ear cress).